A 40-amino-acid chain; its full sequence is Lucifensin (40 aa).

3 disulfide bridges follow: Cys3–Cys30, Cys16–Cys36, and Cys20–Cys38.

This sequence belongs to the invertebrate defensin family. Type 1 subfamily. Post-translationally, the disulfide bonds are essential for antimicrobial activity. Larval fat body, hemolymph and salivary glands (at protein level).

Its subcellular location is the secreted. Its function is as follows. Shows strong antibacterial activity against the Gram-positive bacterium M.luteus. Also shows antibacterial activity against the Gram-positive bacteria E.fecalis, S.aureus, S.carnosus, S.pneumoniae and S.pyogenes and against a number of methicillin-resistant S.aureus and glycopeptide-intermediate S.aureus isolates. Does not show antibacterial activity against Gram-negative bacteria or antifungal activity against C.utilis. Shows slight antifungal activity against C.albicans. This chain is Lucifensin, found in Lucilia cuprina (Green bottle fly).